A 78-amino-acid polypeptide reads, in one-letter code: Metallothionein-like protein type 2 (78 aa).

It belongs to the metallothionein superfamily. Type 15 family.

Its function is as follows. Metallothioneins have a high content of cysteine residues that bind various heavy metals. The polypeptide is Metallothionein-like protein type 2 (Nicotiana glutinosa (Tobacco)).